We begin with the raw amino-acid sequence, 165 residues long: MKKIAIYPGTFDPITYGHLDVITRATKIFDNIIIAISNNVHKKTIFNLKERIKLTKLATFHLKNIKKVIGFNGLLANLAKREKSNILIRGVRTIFDFDYEIKLAAINKQIYPDLDSIFFLSSKEVSFISSSFVKEIAKYQGNIKPYLPKEIHFALIKKFKDIPQK.

Position 10 (Thr10) interacts with substrate. ATP contacts are provided by residues 10–11 (TF) and His18. Substrate-binding residues include Lys42, Leu75, and Arg89. Residues 90–92 (GVR), Glu100, and 125–131 (VSFISSS) contribute to the ATP site.

This sequence belongs to the bacterial CoaD family. As to quaternary structure, homohexamer. It depends on Mg(2+) as a cofactor.

The protein localises to the cytoplasm. The enzyme catalyses (R)-4'-phosphopantetheine + ATP + H(+) = 3'-dephospho-CoA + diphosphate. The protein operates within cofactor biosynthesis; coenzyme A biosynthesis; CoA from (R)-pantothenate: step 4/5. In terms of biological role, reversibly transfers an adenylyl group from ATP to 4'-phosphopantetheine, yielding dephospho-CoA (dPCoA) and pyrophosphate. The polypeptide is Phosphopantetheine adenylyltransferase (Buchnera aphidicola subsp. Schizaphis graminum (strain Sg)).